The primary structure comprises 419 residues: MPIFKKTLIVLSFIFLISILIYLNMYLFGTSTVGIYGVILITYLVIKLGLSFLYEPFKGKPHDYKVAAVIPSYNEDAESLLETLKSVLAQTYPLSEIYIVDDGSSNTDAIQLIEEYVNREVDICRNVIVHRSLVNKGKRHAQAWAFERSDADVFLTVDSDTYIYPNALEELLKSFNDETVYAATGHLNARNRQTNLLTRLTDIRYDNAFGVERAAQSLTGNILVCSGPLSIYRREVIIPNLERYKNQTFLGLPVSIGDDRCLTNYAIDLGRTVYQSTARCDTDVPFQLKSYLKQQNRWNKSFFRESIISVKKILSNPIVALWTIFEVVMFMMLIVAIGNLLFNQAIQLDLIKLFAFLSIIFIVALCRNVHYMVKHPASFLLSPLYGILHLFVLQPLKLYSLCTIKNTEWGTRKKVTIFK.

Transmembrane regions (helical) follow at residues 8–28, 33–53, 318–338, 345–365, and 376–396; these read LIVL…MYLF, VGIY…LSFL, IVAL…VAIG, AIQL…IVAL, and PASF…LQPL.

Belongs to the NodC/HAS family. Mg(2+) serves as cofactor.

Its subcellular location is the cell membrane. It catalyses the reaction [hyaluronan](n) + UDP-N-acetyl-alpha-D-glucosamine = N-acetyl-beta-D-glucosaminyl-(1-&gt;4)-[hyaluronan](n) + UDP + H(+). The enzyme catalyses N-acetyl-beta-D-glucosaminyl-(1-&gt;4)-[hyaluronan](n) + UDP-alpha-D-glucuronate = [hyaluronan](n+1) + UDP + H(+). It functions in the pathway glycan biosynthesis; hyaluronan biosynthesis. Its function is as follows. Glycosaminoglycan synthesis. The hyaluronic acid capsule is involved in the pathogenicity of group A Streptococci; it may be the major virulence determinant. The chain is Hyaluronan synthase (hasA) from Streptococcus pyogenes serotype M18 (strain MGAS8232).